The primary structure comprises 340 residues: Tryptophan--tRNA ligase (340 aa).

Residues 11–13 (RPT) and 19–20 (GH) each bind ATP. The short motif at 12 to 20 (PTGKLHLGH) is the 'HIGH' region element. Aspartate 140 serves as a coordination point for L-tryptophan. Residues 152–154 (GND), leucine 194, and 202–206 (KMSKS) contribute to the ATP site. The 'KMSKS' region motif lies at 202-206 (KMSKS).

The protein belongs to the class-I aminoacyl-tRNA synthetase family. Homodimer.

It is found in the cytoplasm. The enzyme catalyses tRNA(Trp) + L-tryptophan + ATP = L-tryptophyl-tRNA(Trp) + AMP + diphosphate + H(+). In terms of biological role, catalyzes the attachment of tryptophan to tRNA(Trp). In Streptococcus mutans serotype c (strain ATCC 700610 / UA159), this protein is Tryptophan--tRNA ligase.